The chain runs to 294 residues: Pyridoxal 5'-phosphate synthase subunit PdxS (294 aa).

Residue aspartate 24 coordinates D-ribose 5-phosphate. The Schiff-base intermediate with D-ribose 5-phosphate role is filled by lysine 81. Residue glycine 153 coordinates D-ribose 5-phosphate. Position 165 (arginine 165) interacts with D-glyceraldehyde 3-phosphate. Residues glycine 214 and 235–236 (GS) contribute to the D-ribose 5-phosphate site.

This sequence belongs to the PdxS/SNZ family. As to quaternary structure, in the presence of PdxT, forms a dodecamer of heterodimers.

The enzyme catalyses aldehydo-D-ribose 5-phosphate + D-glyceraldehyde 3-phosphate + L-glutamine = pyridoxal 5'-phosphate + L-glutamate + phosphate + 3 H2O + H(+). It functions in the pathway cofactor biosynthesis; pyridoxal 5'-phosphate biosynthesis. Catalyzes the formation of pyridoxal 5'-phosphate from ribose 5-phosphate (RBP), glyceraldehyde 3-phosphate (G3P) and ammonia. The ammonia is provided by the PdxT subunit. Can also use ribulose 5-phosphate and dihydroxyacetone phosphate as substrates, resulting from enzyme-catalyzed isomerization of RBP and G3P, respectively. The chain is Pyridoxal 5'-phosphate synthase subunit PdxS from Geobacillus thermodenitrificans (strain NG80-2).